A 434-amino-acid polypeptide reads, in one-letter code: A-adding tRNA nucleotidyltransferase (434 aa).

Position 20–23 (20–23 (GAVR)) interacts with ATP. Mg(2+) contacts are provided by Asp-33 and Asp-35. Residues 91–92 (RD), Asn-96, 132–141 (DPLRAWRAAR), and Arg-177 contribute to the ATP site. Positions 227-339 (VFEHGVEALH…ELLPDLLSLM (113 aa)) constitute an HD domain.

It belongs to the tRNA nucleotidyltransferase/poly(A) polymerase family. Requires Mg(2+) as cofactor.

It catalyses the reaction a tRNA with a 3' CC end + ATP = a tRNA with a 3' CCA end + diphosphate. Functionally, tRNA nucleotidyltransferase involved in the synthesis of the tRNA CCA terminus. Adds the terminal adenosine residue to tRNA. The polypeptide is A-adding tRNA nucleotidyltransferase (Deinococcus radiodurans (strain ATCC 13939 / DSM 20539 / JCM 16871 / CCUG 27074 / LMG 4051 / NBRC 15346 / NCIMB 9279 / VKM B-1422 / R1)).